We begin with the raw amino-acid sequence, 219 residues long: Ras-related protein RABA5d (219 aa).

At serine 2 the chain carries N-acetylserine. 19-26 contacts GTP; it reads GDSAVGKS. The Effector region signature appears at 41-49; sequence SKATIGVEF. GTP contacts are provided by residues 67–71, 125–128, and 155–156; these read DTAGQ, NKCD, and SA. 2 S-geranylgeranyl cysteine lipidation sites follow: cysteine 215 and cysteine 216.

This sequence belongs to the small GTPase superfamily. Rab family.

It is found in the cell membrane. Intracellular vesicle trafficking and protein transport. The polypeptide is Ras-related protein RABA5d (RABA5D) (Arabidopsis thaliana (Mouse-ear cress)).